We begin with the raw amino-acid sequence, 309 residues long: Porphobilinogen deaminase (309 aa).

An S-(dipyrrolylmethanemethyl)cysteine modification is found at Cys-244.

This sequence belongs to the HMBS family. In terms of assembly, monomer. Requires dipyrromethane as cofactor.

The enzyme catalyses 4 porphobilinogen + H2O = hydroxymethylbilane + 4 NH4(+). The protein operates within porphyrin-containing compound metabolism; protoporphyrin-IX biosynthesis; coproporphyrinogen-III from 5-aminolevulinate: step 2/4. Functionally, tetrapolymerization of the monopyrrole PBG into the hydroxymethylbilane pre-uroporphyrinogen in several discrete steps. This Agrobacterium fabrum (strain C58 / ATCC 33970) (Agrobacterium tumefaciens (strain C58)) protein is Porphobilinogen deaminase.